A 455-amino-acid chain; its full sequence is Transcriptional regulatory protein FlbD (455 aa).

A Response regulatory domain is found at 2 to 114; it reads RLLVVGKLNG…LIAAVLAAVT (113 aa). The Sigma-54 factor interaction domain occupies 120-349; it reads MVVRDPAMEQ…LENAMHRAVL (230 aa). ATP-binding positions include 148–155 and 211–220; these read GESGSGKE and ADGGTLLLDE. The H-T-H motif DNA-binding region spans 416 to 435; that stretch reads RTHAANILGISIRTLRNKLK.

Its subcellular location is the cytoplasm. Functionally, activation of sigma-54-dependent flagellar gene promoters and strong negative autoregulatory effects on its own promoter. The synthesis and function of FlbD in C.crescentus is controlled by an internal cell-cycle clock. This is Transcriptional regulatory protein FlbD (flbD) from Caulobacter vibrioides (strain ATCC 19089 / CIP 103742 / CB 15) (Caulobacter crescentus).